The sequence spans 166 residues: Small ribosomal subunit protein uS9 (166 aa).

Positions 135 to 166 (KKAGFLTRDPRATERKKYGLKKARKAPQYSKR) are disordered. Basic and acidic residues predominate over residues 142-151 (RDPRATERKK). The span at 152–166 (YGLKKARKAPQYSKR) shows a compositional bias: basic residues.

It belongs to the universal ribosomal protein uS9 family.

The polypeptide is Small ribosomal subunit protein uS9 (Mycobacterium avium (strain 104)).